A 129-amino-acid polypeptide reads, in one-letter code: Profilin-4 (129 aa).

Belongs to the profilin family. In terms of tissue distribution, expressed in testis, in germ cells in seminiferous tubules (at protein level).

Its subcellular location is the cytoplasm. Functionally, involved in male fertility. Required for manchette development and acrosome biogenesis during spermiogenesis. Binds in vitro to phospholipids, including phosphatidylinositol 3-phosphate (PtdIns(3)P), phosphatidylinositol 4,5-bisphosphate (PtdIns(4,5)P2), phosphatidylinositol 4-phosphate (PtdIns(4)P) and phosphatidic acid (PA). Contrary to other profilin family members, does not bind to actin in vitro. This Mus musculus (Mouse) protein is Profilin-4 (Pfn4).